A 376-amino-acid polypeptide reads, in one-letter code: Putative glutamate--cysteine ligase 2 (376 aa).

The protein belongs to the glutamate--cysteine ligase type 2 family. YbdK subfamily.

The enzyme catalyses L-cysteine + L-glutamate + ATP = gamma-L-glutamyl-L-cysteine + ADP + phosphate + H(+). Functionally, ATP-dependent carboxylate-amine ligase which exhibits weak glutamate--cysteine ligase activity. This Paracoccus denitrificans (strain Pd 1222) protein is Putative glutamate--cysteine ligase 2.